A 494-amino-acid polypeptide reads, in one-letter code: Glycerol kinase (494 aa).

T12 provides a ligand contact to ADP. ATP contacts are provided by T12, T13, and S14. A sn-glycerol 3-phosphate-binding site is contributed by T12. ADP is bound at residue R16. 4 residues coordinate sn-glycerol 3-phosphate: R82, E83, Y135, and D244. Glycerol is bound by residues R82, E83, Y135, D244, and Q245. Residues T266 and G309 each coordinate ADP. 4 residues coordinate ATP: T266, G309, Q313, and G409. ADP-binding residues include G409 and N413.

It belongs to the FGGY kinase family.

It carries out the reaction glycerol + ATP = sn-glycerol 3-phosphate + ADP + H(+). It functions in the pathway polyol metabolism; glycerol degradation via glycerol kinase pathway; sn-glycerol 3-phosphate from glycerol: step 1/1. Its activity is regulated as follows. Inhibited by fructose 1,6-bisphosphate (FBP). Functionally, key enzyme in the regulation of glycerol uptake and metabolism. Catalyzes the phosphorylation of glycerol to yield sn-glycerol 3-phosphate. The chain is Glycerol kinase from Alteromonas mediterranea (strain DSM 17117 / CIP 110805 / LMG 28347 / Deep ecotype).